The primary structure comprises 178 residues: ATP synthase subunit delta (178 aa).

This sequence belongs to the ATPase delta chain family. F-type ATPases have 2 components, F(1) - the catalytic core - and F(0) - the membrane proton channel. F(1) has five subunits: alpha(3), beta(3), gamma(1), delta(1), epsilon(1). F(0) has three main subunits: a(1), b(2) and c(10-14). The alpha and beta chains form an alternating ring which encloses part of the gamma chain. F(1) is attached to F(0) by a central stalk formed by the gamma and epsilon chains, while a peripheral stalk is formed by the delta and b chains.

The protein localises to the cell inner membrane. Its function is as follows. F(1)F(0) ATP synthase produces ATP from ADP in the presence of a proton or sodium gradient. F-type ATPases consist of two structural domains, F(1) containing the extramembraneous catalytic core and F(0) containing the membrane proton channel, linked together by a central stalk and a peripheral stalk. During catalysis, ATP synthesis in the catalytic domain of F(1) is coupled via a rotary mechanism of the central stalk subunits to proton translocation. Functionally, this protein is part of the stalk that links CF(0) to CF(1). It either transmits conformational changes from CF(0) to CF(1) or is implicated in proton conduction. This is ATP synthase subunit delta from Nitrosococcus oceani (strain ATCC 19707 / BCRC 17464 / JCM 30415 / NCIMB 11848 / C-107).